Consider the following 83-residue polypeptide: Non-muscle caldesmon (83 aa).

Composition is skewed to basic and acidic residues over residues 1 to 44 (QTSE…KEEK) and 62 to 76 (NQLKDEKTKKDKESK). The segment at 1–63 (QTSEKEGRSE…PKPGSIEENQ (63 aa)) is myosin and calmodulin-binding. A disordered region spans residues 1–83 (QTSEKEGRSE…ESKNILSLCL (83 aa)).

In terms of processing, in non-muscle cells, phosphorylation by CDC2 during mitosis causes caldesmon to dissociate from microfilaments. Phosphorylation reduces caldesmon binding to actin, myosin, and calmodulin as well as its inhibition of actomyosin ATPase activity. Phosphorylation also occurs in both quiescent and dividing smooth muscle cells with similar effects on the interaction with actin and calmodulin and on microfilaments reorganization.

It localises to the cytoplasm. The protein localises to the cytoskeleton. Its subcellular location is the myofibril. It is found in the stress fiber. Functionally, actin- and myosin-binding protein implicated in the regulation of actomyosin interactions in smooth muscle and nonmuscle cells (could act as a bridge between myosin and actin filaments). Stimulates actin binding of tropomyosin which increases the stabilization of actin filament structure. In muscle tissues, inhibits the actomyosin ATPase by binding to F-actin. This inhibition is attenuated by calcium-calmodulin and is potentiated by tropomyosin. Interacts with actin, myosin, two molecules of tropomyosin and with calmodulin. Also plays an essential role during cellular mitosis and receptor capping. This is Non-muscle caldesmon (CALD1) from Bos taurus (Bovine).